Here is a 120-residue protein sequence, read N- to C-terminus: Ribonuclease P protein component (120 aa).

This sequence belongs to the RnpA family. As to quaternary structure, consists of a catalytic RNA component (M1 or rnpB) and a protein subunit.

The catalysed reaction is Endonucleolytic cleavage of RNA, removing 5'-extranucleotides from tRNA precursor.. RNaseP catalyzes the removal of the 5'-leader sequence from pre-tRNA to produce the mature 5'-terminus. It can also cleave other RNA substrates such as 4.5S RNA. The protein component plays an auxiliary but essential role in vivo by binding to the 5'-leader sequence and broadening the substrate specificity of the ribozyme. The sequence is that of Ribonuclease P protein component from Bordetella avium (strain 197N).